Reading from the N-terminus, the 309-residue chain is Malate dehydrogenase (309 aa).

Residues 8-13 (GAGLVG) and Asp33 contribute to the NAD(+) site. Arg82 and Arg88 together coordinate substrate. Residues Asn95 and 118–120 (VSN) each bind NAD(+). Positions 120 and 151 each coordinate substrate. The active-site Proton acceptor is His175.

Belongs to the LDH/MDH superfamily. MDH type 3 family.

It catalyses the reaction (S)-malate + NAD(+) = oxaloacetate + NADH + H(+). Its function is as follows. Catalyzes the reversible oxidation of malate to oxaloacetate. The protein is Malate dehydrogenase of Pseudomonas putida (strain ATCC 700007 / DSM 6899 / JCM 31910 / BCRC 17059 / LMG 24140 / F1).